Here is a 75-residue protein sequence, read N- to C-terminus: Exodeoxyribonuclease 7 small subunit (75 aa).

Belongs to the XseB family. As to quaternary structure, heterooligomer composed of large and small subunits.

It is found in the cytoplasm. The enzyme catalyses Exonucleolytic cleavage in either 5'- to 3'- or 3'- to 5'-direction to yield nucleoside 5'-phosphates.. Its function is as follows. Bidirectionally degrades single-stranded DNA into large acid-insoluble oligonucleotides, which are then degraded further into small acid-soluble oligonucleotides. This Citrifermentans bemidjiense (strain ATCC BAA-1014 / DSM 16622 / JCM 12645 / Bem) (Geobacter bemidjiensis) protein is Exodeoxyribonuclease 7 small subunit.